Reading from the N-terminus, the 556-residue chain is Formate--tetrahydrofolate ligase 1 (556 aa).

An ATP-binding site is contributed by 65–72 (TPAGEGKS).

It belongs to the formate--tetrahydrofolate ligase family.

It carries out the reaction (6S)-5,6,7,8-tetrahydrofolate + formate + ATP = (6R)-10-formyltetrahydrofolate + ADP + phosphate. It participates in one-carbon metabolism; tetrahydrofolate interconversion. This Streptococcus pyogenes serotype M2 (strain MGAS10270) protein is Formate--tetrahydrofolate ligase 1.